Reading from the N-terminus, the 107-residue chain is High mobility group protein HMG-I/HMG-Y (107 aa).

The tract at residues 1–107 (MSESSSKSSQ…ISQESSEEEQ (107 aa)) is disordered. Residue serine 2 is modified to N-acetylserine. An N6-acetyllysine modification is found at lysine 7. ADP-ribosylserine is present on serine 8. Serine 9 carries the ADP-ribosylserine; alternate modification. Residue serine 9 is modified to Phosphoserine; alternate. Lysine 15 is subject to N6-acetyllysine; alternate. Lysine 15 is covalently cross-linked (Glycyl lysine isopeptide (Lys-Gly) (interchain with G-Cter in SUMO2); alternate). The span at 15-24 (KQEKDGTEKR) shows a compositional bias: basic and acidic residues. A DNA-binding region (a.T hook 1) is located at residues 21-31 (TEKRGRGRPRK). An Asymmetric dimethylarginine; alternate modification is found at arginine 26. An Omega-N-methylarginine; alternate modification is found at arginine 26. At arginine 26 the chain carries Symmetric dimethylarginine; alternate. Serine 36 bears the Phosphoserine; by HIPK2 and CDC2 mark. Threonine 39 carries the phosphothreonine modification. Residues serine 44 and serine 49 each carry the phosphoserine modification. Threonine 53 is modified (phosphothreonine; by HIPK2 and CDC2). 2 DNA-binding regions (a.T hook) span residues 53–63 (TPKRPRGRPKG) and 78–89 (APGRKPRGRPKK). The tract at residues 53–77 (TPKRPRGRPKGSKNKGAAKTRKATT) is interaction with HIPK2. Residues 55–74 (KRPRGRPKGSKNKGAAKTRK) are compositionally biased toward basic residues. Asymmetric dimethylarginine; by PRMT6; alternate occurs at positions 58 and 60. Residues arginine 58 and arginine 60 each carry the omega-N-methylarginine; by PRMT6; alternate modification. The segment covering 93–107 (EEEEGISQESSEEEQ) has biased composition (acidic residues). Phosphoserine occurs at positions 99, 102, and 103.

The protein belongs to the HMGA family. As to quaternary structure, interacts with HIPK2. Isoforms HMG-I and HMG-Y can be phosphorylated by HIPK2. Phosphorylation may modulate DNA-binding affinity. In terms of processing, methylation at Arg-58 is mutually exclusive with methylation at Arg-60.

Its subcellular location is the nucleus. The protein localises to the chromosome. In terms of biological role, HMG-I/Y bind preferentially to the minor groove of A+T rich regions in double-stranded DNA. It is suggested that these proteins could function in nucleosome phasing and in the 3'-end processing of mRNA transcripts. They are also involved in the transcription regulation of genes containing, or in close proximity to A+T-rich regions. The polypeptide is High mobility group protein HMG-I/HMG-Y (HMGA1) (Cricetulus griseus (Chinese hamster)).